We begin with the raw amino-acid sequence, 22 residues long: FDESFGFQGPSTYEKTPLGEPA.

The interval 1–22 (FDESFGFQGPSTYEKTPLGEPA) is disordered.

As to expression, hemolymph.

The protein resides in the secreted. The protein localises to the extracellular space. Inhibits chymotrypsin stoichiometrically. Also inhibits porcine pancreatic elastase and trypsin. This chain is Chymotrypsin inhibitor, found in Mythimna unipuncta (Armyworm moth).